A 355-amino-acid polypeptide reads, in one-letter code: UDP-N-acetylglucosamine--N-acetylmuramyl-(pentapeptide) pyrophosphoryl-undecaprenol N-acetylglucosamine transferase (355 aa).

UDP-N-acetyl-alpha-D-glucosamine-binding positions include 15–17, Asn-127, Arg-163, Ser-191, Ile-244, 263–268, and Gln-288; these read TGG and ALTVSE.

The protein belongs to the glycosyltransferase 28 family. MurG subfamily.

Its subcellular location is the cell inner membrane. The catalysed reaction is di-trans,octa-cis-undecaprenyl diphospho-N-acetyl-alpha-D-muramoyl-L-alanyl-D-glutamyl-meso-2,6-diaminopimeloyl-D-alanyl-D-alanine + UDP-N-acetyl-alpha-D-glucosamine = di-trans,octa-cis-undecaprenyl diphospho-[N-acetyl-alpha-D-glucosaminyl-(1-&gt;4)]-N-acetyl-alpha-D-muramoyl-L-alanyl-D-glutamyl-meso-2,6-diaminopimeloyl-D-alanyl-D-alanine + UDP + H(+). It functions in the pathway cell wall biogenesis; peptidoglycan biosynthesis. Its function is as follows. Cell wall formation. Catalyzes the transfer of a GlcNAc subunit on undecaprenyl-pyrophosphoryl-MurNAc-pentapeptide (lipid intermediate I) to form undecaprenyl-pyrophosphoryl-MurNAc-(pentapeptide)GlcNAc (lipid intermediate II). This is UDP-N-acetylglucosamine--N-acetylmuramyl-(pentapeptide) pyrophosphoryl-undecaprenol N-acetylglucosamine transferase from Escherichia coli O139:H28 (strain E24377A / ETEC).